The chain runs to 708 residues: O-antigen chain terminator bifunctional methyltransferase/kinase WbdD (708 aa).

The interval 1-210 (MTKDLNTLVS…VPRPMYLVSN (210 aa)) is methyltransferase. Residues 16–17 (YQ), arginine 36, glycine 61, 82–87 (DFQQEN), 108–111 (GRIE), and leucine 128 contribute to the S-adenosyl-L-methionine site. Residues 211–459 (HRVLINDFNQ…AKLPSAEQQR (249 aa)) form a kinase region. Residues proline 229, histidine 237, 241–243 (RRY), lysine 252, glutamate 274, 309–311 (EKL), methionine 358, and aspartate 369 each bind ATP. Residues 485-594 (AGSEALRGQI…EIEKIHRSRS (110 aa)) adopt a coiled-coil conformation. Positions 601 to 669 (YRYLGLQIHL…RLYRRMNPLP (69 aa)) are required for membrane-binding. The segment at 687-708 (VMHPELLPPEVYEIYLKLTKNK) is required for localizing WbdA to the membrane.

Belongs to the WbdD family. Homotrimer in solution. Interacts with WbdA.

It is found in the cell inner membrane. It catalyses the reaction 3-O-phospho-alpha-D-Man-(1-&gt;2)-alpha-D-Man-(1-&gt;2)-[alpha-D-Man-(1-&gt;3)-alpha-D-Man-(1-&gt;3)-alpha-D-Man-(1-&gt;2)-alpha-D-Man-(1-&gt;2)](n)-alpha-D-Man-(1-&gt;3)-alpha-D-Man-(1-&gt;3)-alpha-D-Man-(1-&gt;3)-alpha-D-GlcNAc-di-trans,octa-cis-undecaprenyl diphosphate + S-adenosyl-L-methionine = 3-O-methylphospho-alpha-D-Man-(1-&gt;2)-alpha-D-Man-(1-&gt;2)-[alpha-D-Man-(1-&gt;3)-alpha-D-Man-(1-&gt;3)-alpha-D-Man-(1-&gt;2)-alpha-D-Man-(1-&gt;2)](n)-alpha-D-Man-(1-&gt;3)-alpha-D-Man-(1-&gt;3)-alpha-D-Man-(1-&gt;3)-alpha-D-GlcNAc-di-trans,octa-cis-undecaprenyl diphosphate + S-adenosyl-L-homocysteine. It carries out the reaction alpha-D-Man-(1-&gt;2)-alpha-D-Man-(1-&gt;2)-[alpha-D-Man-(1-&gt;3)-alpha-D-Man-(1-&gt;3)-alpha-D-Man-(1-&gt;2)-alpha-D-Man-(1-&gt;2)](n)-alpha-D-Man-(1-&gt;3)-alpha-D-Man-(1-&gt;3)-alpha-D-Man-(1-&gt;3)-alpha-D-GlcNAc-di-trans,octa-cis-undecaprenyl diphosphate + ATP = 3-O-phospho-alpha-D-Man-(1-&gt;2)-alpha-D-Man-(1-&gt;2)-[alpha-D-Man-(1-&gt;3)-alpha-D-Man-(1-&gt;3)-alpha-D-Man-(1-&gt;2)-alpha-D-Man-(1-&gt;2)](n)-alpha-D-Man-(1-&gt;3)-alpha-D-Man-(1-&gt;3)-alpha-D-Man-(1-&gt;3)-alpha-D-GlcNAc-di-trans,octa-cis-undecaprenyl diphosphate + ADP + H(+). The protein operates within bacterial outer membrane biogenesis; LPS O-antigen biosynthesis. Its function is as follows. Regulates the length of the LPS O-antigen polysaccharide chain. Stops the polymerization of the chain by phosphorylating and then methylating the phosphate on the terminal sugar. This terminal modification is essential for export of the O-antigen across the inner membrane. WbdD is also required for correct localization of the WbdA mannosyltransferase. In Escherichia coli, this protein is O-antigen chain terminator bifunctional methyltransferase/kinase WbdD.